The chain runs to 481 residues: ATP synthase subunit beta (481 aa).

Residue 160-167 (GGAGVGKT) participates in ATP binding.

Belongs to the ATPase alpha/beta chains family. As to quaternary structure, F-type ATPases have 2 components, CF(1) - the catalytic core - and CF(0) - the membrane proton channel. CF(1) has five subunits: alpha(3), beta(3), gamma(1), delta(1), epsilon(1). CF(0) has three main subunits: a(1), b(2) and c(9-12). The alpha and beta chains form an alternating ring which encloses part of the gamma chain. CF(1) is attached to CF(0) by a central stalk formed by the gamma and epsilon chains, while a peripheral stalk is formed by the delta and b chains.

The protein localises to the cell inner membrane. It catalyses the reaction ATP + H2O + 4 H(+)(in) = ADP + phosphate + 5 H(+)(out). Its function is as follows. Produces ATP from ADP in the presence of a proton gradient across the membrane. The catalytic sites are hosted primarily by the beta subunits. The protein is ATP synthase subunit beta of Myxococcus xanthus (strain DK1622).